The following is a 118-amino-acid chain: Hisactophilin-1 (118 aa).

Gly-2 carries N-myristoyl glycine lipidation. Residues 8–109 are contains several HHXH repeats; it reads SHHGHFLSAE…HVSTKEHHDH (102 aa). 2 consecutive repeat copies span residues 34 to 46 and 74 to 86. The tract at residues 34 to 86 is 2 X 13 AA approximate repeats; that stretch reads FHVENHGGKVALKTHCGKYLSIGDHKQVYLSHHLHGDHSLFHLEHHGGKVSIK.

This sequence belongs to the hisactophilin family. In terms of assembly, homodimer or heterodimer of hatA and hatB, linked by a disulfide bond. Phosphorylated.

It localises to the cytoplasm. It is found in the cell membrane. Its function is as follows. May act as an intracellular pH sensor that links chemotactic signals to responses in the microfilament system of the cells by nucleating actin polymerization or stabilizing the filaments. This chain is Hisactophilin-1 (hatA), found in Dictyostelium discoideum (Social amoeba).